The primary structure comprises 64 residues: DNA gyrase inhibitor YacG (64 aa).

The Zn(2+) site is built by cysteine 7, cysteine 10, cysteine 26, and cysteine 30. A disordered region spans residues 43 to 64; that stretch reads KRIPGPINPDLLPYPDEGEQWQ.

This sequence belongs to the DNA gyrase inhibitor YacG family. Interacts with GyrB. It depends on Zn(2+) as a cofactor.

Functionally, inhibits all the catalytic activities of DNA gyrase by preventing its interaction with DNA. Acts by binding directly to the C-terminal domain of GyrB, which probably disrupts DNA binding by the gyrase. The polypeptide is DNA gyrase inhibitor YacG (Aeromonas salmonicida (strain A449)).